A 566-amino-acid chain; its full sequence is Beta,beta-carotene 15,15'-dioxygenase (566 aa).

Residues histidine 172, histidine 237, histidine 308, and histidine 514 each contribute to the Fe cation site. The interval 529-566 is disordered; the sequence is TPAKTQEDENSDHPTGLTAPGLGHGENDFTAGHGGKSL.

Belongs to the carotenoid oxygenase family. Fe(2+) is required as a cofactor.

The protein resides in the cytoplasm. It is found in the cytosol. The enzyme catalyses all-trans-beta-carotene + O2 = 2 all-trans-retinal. Its pathway is cofactor metabolism; retinol metabolism. In terms of biological role, symmetrically cleaves beta-carotene into two molecules of retinal using a dioxygenase mechanism. This chain is Beta,beta-carotene 15,15'-dioxygenase, found in Rattus norvegicus (Rat).